The sequence spans 751 residues: Disintegrin and metalloproteinase domain-containing protein 2 (751 aa).

The signal sequence occupies residues 1–16 (MLRVLFLLCGLSGLRT). Residues 17–173 (KENSERLHVQ…PYKVQSVQPR (157 aa)) constitute a propeptide that is removed on maturation. The Extracellular segment spans residues 17–702 (KENSERLHVQ…DVYQTAKPTR (686 aa)). Residues Asn-122, Asn-147, Asn-219, and Asn-289 are each glycosylated (N-linked (GlcNAc...) asparagine). The 198-residue stretch at 177–374 (QYIEMHVVVE…QKSQCLQNLP (198 aa)) folds into the Peptidase M12B domain. 3 cysteine pairs are disulfide-bonded: Cys-286/Cys-369, Cys-328/Cys-353, and Cys-330/Cys-335. Residues Asn-352, Asn-434, Asn-458, Asn-559, and Asn-566 are each glycosylated (N-linked (GlcNAc...) asparagine). A Disintegrin domain is found at 383–472 (DAVCGNSIVE…LCPDDIVIQN (90 aa)). Residues Cys-444 and Cys-464 are joined by a disulfide bond. One can recognise an EGF-like domain in the interval 612-645 (VNLGCTLQNCNNQGICNSLQHCHCNPTFLPPNCS). Cystine bridges form between Cys-616–Cys-627, Cys-621–Cys-633, and Cys-635–Cys-644. Asn-643 is a glycosylation site (N-linked (GlcNAc...) asparagine). The chain crosses the membrane as a helical span at residues 703–723 (WPFFLLIPFFIILGALIAILV). At 724-751 (KVQFQRKKWKTEDYTSDEQFESDSELKE) the chain is on the cytoplasmic side. Position 745 is a phosphoserine (Ser-745).

Heterodimer with ADAM1/fertilin subunit alpha. In terms of processing, the signal and the metalloprotease domain are cleaved during the epididymal maturation of the spermatozoa. In terms of tissue distribution, expressed specifically in testis.

It is found in the membrane. In terms of biological role, sperm surface membrane protein that may be involved in sperm-egg plasma membrane adhesion and fusion during fertilization. Could have a direct role in sperm-zona binding or migration of sperm from the uterus into the oviduct. Interactions with egg membrane could be mediated via binding between its disintegrin-like domain to one or more integrins receptors on the egg. This is a non catalytic metalloprotease-like protein. The protein is Disintegrin and metalloproteinase domain-containing protein 2 (ADAM2) of Oryctolagus cuniculus (Rabbit).